The sequence spans 492 residues: G2/mitotic-specific cyclin CYB1 (492 aa).

Positions 1-176 (MPQVTKTNNE…QPEVGERSQS (176 aa)) are disordered. The span at 23 to 33 (QESISTIKNTT) shows a compositional bias: polar residues. Positions 34–58 (ISNSQHKQQTQQQISSPPQVSVTSS) are enriched in low complexity. The segment covering 59–83 (EGVSHVNTRQYLGDVSNQYITNAKP) has biased composition (polar residues). Positions 111 to 135 (ASDNNNNGSTSSSSNSSNNNNNDAN) are enriched in low complexity.

The protein belongs to the cyclin family. Cyclin AB subfamily.

Functionally, essential for the control of the cell cycle at the G2/M (mitosis) transition. Interacts with the CDC2 protein kinase to form MPF. G2/M cyclins accumulate steadily during G2 and are abruptly destroyed at mitosis. The polypeptide is G2/mitotic-specific cyclin CYB1 (CYB1) (Candida albicans (Yeast)).